The following is a 403-amino-acid chain: Na(+)/H(+) antiporter NhaA (403 aa).

Transmembrane regions (helical) follow at residues 23-43, 66-86, 101-121, 132-152, 161-181, 184-204, 219-239, 257-277, 297-317, 333-353, and 363-383; these read AFFLLLASLAGFVLANSPWAA, VAAWVSDGLMTLFFLVVILEI, VALPLIGAVGGMVVPALTYLL, GWAIPVATDAAFTLPIILALG, AWLMALAIFDDVLGIVVIALF, GSMYWPALLAVVLVTAALIGA, GILLWTALLDSGLHPTLAGVI, WVSSAVTPLVTWIVLPLFGFM, LGIMLGLMLGKPVGVFGATLL, GMLFGLSLLCGIGFTISLFVA, and IAPAKMGIFAGSALSALTGWF.

It belongs to the NhaA Na(+)/H(+) (TC 2.A.33) antiporter family.

Its subcellular location is the cell inner membrane. It catalyses the reaction Na(+)(in) + 2 H(+)(out) = Na(+)(out) + 2 H(+)(in). Na(+)/H(+) antiporter that extrudes sodium in exchange for external protons. This Gluconobacter oxydans (strain 621H) (Gluconobacter suboxydans) protein is Na(+)/H(+) antiporter NhaA.